Reading from the N-terminus, the 301-residue chain is uncharacterized protein (301 aa).

Catalysis depends on charge relay system residues Ser-44 and Tyr-107. Tyr-133 serves as the catalytic Proton donor. Residue Lys-162 is the Schiff-base intermediate with substrate of the active site.

This sequence belongs to the DapA family. In terms of assembly, homotetramer.

The protein localises to the cytoplasm. This is an uncharacterized protein from Pyrobaculum arsenaticum (strain DSM 13514 / JCM 11321 / PZ6).